We begin with the raw amino-acid sequence, 235 residues long: Protein mxl-3 (235 aa).

Residues 18–49 are disordered; it reads EKQFRKRHHSDSSDDDSSSPKSASPSMDDDRR. Positions 47-60 are basic motif; it reads DRRAHHNELERRRR. A bHLH domain is found at 47 to 98; it reads DRRAHHNELERRRRDHIKDHFTILKDAIPLLDGEKSSRALILKRAVEFIHVM. The segment at 61–98 is helix-loop-helix motif; the sequence is DHIKDHFTILKDAIPLLDGEKSSRALILKRAVEFIHVM.

Belongs to the MAX family. May form homodimer. Interacts (via N-terminus) with skn-1 isoforms a and c. Expressed in the intestine and in the AWC sensory neurons.

The protein localises to the nucleus. Its subcellular location is the cytoplasm. Its function is as follows. Transcription factor which regulates the expression of genes involved in lipid metabolism in response to nutrient availability. Binds to the E-box motif 5'-CACGTG-3'. Under well-fed conditions, binds to the promoter and represses the expression of lipase genes lipl-1, lipl-2, lipl-3 and to a lesser extent lipl-5, thereby preventing lipolysis. In response to a high-glucose diet, promotes fatty acid synthesis, elongation and desaturation by up-regulating transcription factor sbp-1 expression. Under well-fed conditions, acts remotely in the intestine to up-regulate the expression of chemoreceptor srh-234 gene in the ADL sensory neuron, possibly by regulating the insulin signaling pathway. This is Protein mxl-3 from Caenorhabditis elegans.